A 549-amino-acid polypeptide reads, in one-letter code: Alanine aminotransferase 2-like (549 aa).

An N6-(pyridoxal phosphate)lysine modification is found at Lys367.

It belongs to the class-I pyridoxal-phosphate-dependent aminotransferase family. Alanine aminotransferase subfamily. In terms of assembly, homodimer. Requires pyridoxal 5'-phosphate as cofactor.

The catalysed reaction is L-alanine + 2-oxoglutarate = pyruvate + L-glutamate. The protein operates within amino-acid degradation; L-alanine degradation via transaminase pathway; pyruvate from L-alanine: step 1/1. Catalyzes the reversible transamination between alanine and 2-oxoglutarate to form pyruvate and glutamate. In Danio rerio (Zebrafish), this protein is Alanine aminotransferase 2-like (gpt2l).